Here is a 163-residue protein sequence, read N- to C-terminus: Small ribosomal subunit protein uS5 (163 aa).

In terms of domain architecture, S5 DRBM spans 8-71 (FIEKVVSLNR…EQARKAMMKI (64 aa)).

Belongs to the universal ribosomal protein uS5 family. In terms of assembly, part of the 30S ribosomal subunit. Contacts proteins S4 and S8.

With S4 and S12 plays an important role in translational accuracy. Its function is as follows. Located at the back of the 30S subunit body where it stabilizes the conformation of the head with respect to the body. This is Small ribosomal subunit protein uS5 from Lawsonia intracellularis (strain PHE/MN1-00).